We begin with the raw amino-acid sequence, 243 residues long: Probable 6-phosphogluconolactonase (243 aa).

Belongs to the glucosamine/galactosamine-6-phosphate isomerase family. 6-phosphogluconolactonase subfamily.

It carries out the reaction 6-phospho-D-glucono-1,5-lactone + H2O = 6-phospho-D-gluconate + H(+). Its pathway is carbohydrate degradation; pentose phosphate pathway; D-ribulose 5-phosphate from D-glucose 6-phosphate (oxidative stage): step 2/3. In terms of biological role, hydrolysis of 6-phosphogluconolactone to 6-phosphogluconate. In Drosophila melanogaster (Fruit fly), this protein is Probable 6-phosphogluconolactonase.